The sequence spans 119 residues: Large ribosomal subunit protein uL18 (119 aa).

Belongs to the universal ribosomal protein uL18 family. In terms of assembly, part of the 50S ribosomal subunit; part of the 5S rRNA/L5/L18/L25 subcomplex. Contacts the 5S and 23S rRNAs.

Functionally, this is one of the proteins that bind and probably mediate the attachment of the 5S RNA into the large ribosomal subunit, where it forms part of the central protuberance. The protein is Large ribosomal subunit protein uL18 of Xanthomonas axonopodis pv. citri (strain 306).